The sequence spans 311 residues: Pyrimidine-specific ribonucleoside hydrolase RihA (311 aa).

Histidine 240 is a catalytic residue.

This sequence belongs to the IUNH family. RihA subfamily.

Its function is as follows. Hydrolyzes cytidine or uridine to ribose and cytosine or uracil, respectively. The sequence is that of Pyrimidine-specific ribonucleoside hydrolase RihA from Salmonella paratyphi C (strain RKS4594).